Consider the following 334-residue polypeptide: Ornithine carbamoyltransferase (334 aa).

Residues S57–T60, Q84, R108, and H135–Q138 each bind carbamoyl phosphate. L-ornithine-binding positions include N169, D233, and S237–M238. Carbamoyl phosphate is bound by residues C275–L276 and R320.

The protein belongs to the aspartate/ornithine carbamoyltransferase superfamily. OTCase family.

It localises to the cytoplasm. It catalyses the reaction carbamoyl phosphate + L-ornithine = L-citrulline + phosphate + H(+). Its pathway is amino-acid biosynthesis; L-arginine biosynthesis; L-arginine from L-ornithine and carbamoyl phosphate: step 1/3. Reversibly catalyzes the transfer of the carbamoyl group from carbamoyl phosphate (CP) to the N(epsilon) atom of ornithine (ORN) to produce L-citrulline. The chain is Ornithine carbamoyltransferase (argF) from Pasteurella multocida (strain Pm70).